Consider the following 295-residue polypeptide: 4-hydroxy-tetrahydrodipicolinate synthase (295 aa).

Residue threonine 48 participates in pyruvate binding. Residue tyrosine 135 is the Proton donor/acceptor of the active site. Catalysis depends on lysine 163, which acts as the Schiff-base intermediate with substrate. Valine 204 serves as a coordination point for pyruvate.

This sequence belongs to the DapA family. As to quaternary structure, homotetramer; dimer of dimers.

The protein resides in the cytoplasm. The catalysed reaction is L-aspartate 4-semialdehyde + pyruvate = (2S,4S)-4-hydroxy-2,3,4,5-tetrahydrodipicolinate + H2O + H(+). It functions in the pathway amino-acid biosynthesis; L-lysine biosynthesis via DAP pathway; (S)-tetrahydrodipicolinate from L-aspartate: step 3/4. In terms of biological role, catalyzes the condensation of (S)-aspartate-beta-semialdehyde [(S)-ASA] and pyruvate to 4-hydroxy-tetrahydrodipicolinate (HTPA). This chain is 4-hydroxy-tetrahydrodipicolinate synthase, found in Francisella tularensis subsp. novicida (strain U112).